A 429-amino-acid chain; its full sequence is MRFLDIRDTNFDAEFAAILARGEETGREVEQVVLDIIADVRARGDEALLEYTRRFDRLEADSVAALQVTEDEIEYAFAKVKDEEIAALKLAVERVARFHEKQKQETWLSTTEPDILLGQMVTPLERVGIYVPGGKASYPSSVIMNAVPARVAGVGEIVMVAPTPGGEINPHVLVAARLSGVDRIFRMGGAQAVAALAYGTATVPRVDKITGPGNIYVATAKKLVFGQVGIDMIAGPSEILVINDGSGTPAHIAADLLSQAEHDELASSILITTDRGFGEQVATEVERQLAQLSRETIARTSWETYGAVIVAGSLDEAIAFSNRIAPEHLELAVANPFEILPRIKNAGAIFLGHFTPEAAGDYLAGPNHTLPTGGTARFFSPLSVDDFVKKSSIVYFSAAGLNRLGRDIVSIAEMEGLEAHGRSVSIRLK.

3 residues coordinate NAD(+): Y130, Q191, and N214. Residues S237, Q259, and H262 each contribute to the substrate site. Q259 and H262 together coordinate Zn(2+). Active-site proton acceptor residues include E327 and H328. Residues H328, D361, E415, and H420 each coordinate substrate. D361 provides a ligand contact to Zn(2+). H420 lines the Zn(2+) pocket.

The protein belongs to the histidinol dehydrogenase family. Zn(2+) is required as a cofactor.

The enzyme catalyses L-histidinol + 2 NAD(+) + H2O = L-histidine + 2 NADH + 3 H(+). It participates in amino-acid biosynthesis; L-histidine biosynthesis; L-histidine from 5-phospho-alpha-D-ribose 1-diphosphate: step 9/9. Catalyzes the sequential NAD-dependent oxidations of L-histidinol to L-histidinaldehyde and then to L-histidine. The polypeptide is Histidinol dehydrogenase (Geobacter sulfurreducens (strain ATCC 51573 / DSM 12127 / PCA)).